We begin with the raw amino-acid sequence, 296 residues long: NAD kinase (296 aa).

Catalysis depends on Asp72, which acts as the Proton acceptor. Residues 72–73 (DG), 146–147 (ND), Arg157, Lys174, Asp176, 187–192 (TAYALS), and Gln247 each bind NAD(+).

The protein belongs to the NAD kinase family. A divalent metal cation serves as cofactor.

The protein localises to the cytoplasm. It catalyses the reaction NAD(+) + ATP = ADP + NADP(+) + H(+). In terms of biological role, involved in the regulation of the intracellular balance of NAD and NADP, and is a key enzyme in the biosynthesis of NADP. Catalyzes specifically the phosphorylation on 2'-hydroxyl of the adenosine moiety of NAD to yield NADP. The chain is NAD kinase from Pseudomonas fluorescens (strain SBW25).